The sequence spans 360 residues: Peptide chain release factor 1 (360 aa).

Gln-235 carries the N5-methylglutamine modification. The tract at residues 284–313 (AKRQQAEASTRRNLLGSGDRSDRNRTYNFP) is disordered.

It belongs to the prokaryotic/mitochondrial release factor family. Post-translationally, methylated by PrmC. Methylation increases the termination efficiency of RF1.

Its subcellular location is the cytoplasm. Peptide chain release factor 1 directs the termination of translation in response to the peptide chain termination codons UAG and UAA. This Citrobacter koseri (strain ATCC BAA-895 / CDC 4225-83 / SGSC4696) protein is Peptide chain release factor 1.